The chain runs to 609 residues: UvrABC system protein C (609 aa).

The 79-residue stretch at 22 to 100 folds into the GIY-YIG domain; it reads EKPGVYQYLN…IKKYKPRYNV (79 aa). Residues 214 to 249 enclose the UVR domain; sequence QDISRMLVEKMQELANEMKFEEAQKIKEKYLLIENY.

This sequence belongs to the UvrC family. Interacts with UvrB in an incision complex.

Its subcellular location is the cytoplasm. Functionally, the UvrABC repair system catalyzes the recognition and processing of DNA lesions. UvrC both incises the 5' and 3' sides of the lesion. The N-terminal half is responsible for the 3' incision and the C-terminal half is responsible for the 5' incision. The protein is UvrABC system protein C of Bacteroides thetaiotaomicron (strain ATCC 29148 / DSM 2079 / JCM 5827 / CCUG 10774 / NCTC 10582 / VPI-5482 / E50).